A 191-amino-acid polypeptide reads, in one-letter code: Chorion class B protein Ld10 (191 aa).

The N-terminal stretch at methionine 1 to serine 21 is a signal peptide.

Belongs to the chorion protein family.

Its function is as follows. This protein is one of many from the eggshell of the gypsy moth. The chain is Chorion class B protein Ld10 from Lymantria dispar (Gypsy moth).